A 420-amino-acid chain; its full sequence is MQSSTQKQAGSLTIVGSGIESISQITLQSLSHIEAASKVFYCVVDPATEAYLLAKNKNCVDLYQYYDNGKPRMDTYIQMAEVMLREVRNGLDIVGVFYGHPGVFVNPSQRAIAIAKSEGYQARMLPGISAEDCLFADLGIDPCNPGCVSYEASDFLIRERPVNVSSHFILWQVGCIGVADFTFVKFNNSKFGVLLDRLEHEYGADHTVVHYIAAVLPYENPVIDKLTISQLRDTEVAKRVSGISTFYIPPKELKDPSMDIMRRLELLAADQVPDKQWHFYPTNQWAPSAPNVVPYGPIEQAAIVQLGSHTIPEQFQPIATSKAMTDILTKLALDPKMLTEYKADRRAFAQSALELTVNERDALEMGTFWALRCAMKKMPSSFMDEVDANNLPVVAVVGVAVGAVAVTVVVSLNDLTDSVN.

The methyltransferase domain stretch occupies residues 1 to 251 (MQSSTQKQAG…GISTFYIPPK (251 aa)). Residues arginine 72, tyrosine 76, and tyrosine 98 contribute to the active site. 8 residues coordinate S-adenosyl-L-methionine: tyrosine 98, histidine 100, valine 103, alanine 130, glutamine 172, alanine 213, serine 244, and threonine 245. The clasp domain stretch occupies residues 252–378 (ELKDPSMDIM…WALRCAMKKM (127 aa)). Positions 379–392 (PSSFMDEVDANNLP) are precursor leader. An N-methylvaline mark is found at valine 394 and valine 396. Glycine 398 is subject to N-methylglycine. Position 399 is an N-methylvaline (valine 399). Alanine 400 is subject to N-methylalanine. An N-methylglycine modification is found at glycine 402. An N-methylvaline mark is found at valine 404, valine 406, valine 408, and valine 410.

This sequence in the N-terminal section; belongs to the precorrin methyltransferase family. Homodimer. In terms of processing, gymMA1 automethylates at Val-394, Val-396, Gly-398, Val-399, Ala-400, Gly-402, Val-404, Val-406, Val-408 and Val-410 before being processed by a prolyloligopeptidase which likely forms a peptidyl ester upon removal of the follower propeptide, which then undergoes macrocyclization with the N-terminus of the modified core peptide. Peptide backbone alpha-N-methylations change the physicochemical properties of amide bonds to provide structural constraints and other favorable characteristics including biological membrane permeability to peptides.

The protein operates within mycotoxin biosynthesis. Its function is as follows. Fusion protein of the methyltransferase gymM1 and the gymnopeptides precursor; part of the gene cluster that mediates the biosynthesis of gymnopeptides, highly methylated cyclic octadecapeptides with striking antiproliferative activity on several human cancer cell lines. Gymnopeptides derive from the C-terminus of the gymMA1 protein, and it is the gymMA1 protein that methylates its own C-terminus using S-adenosyl methionine (SAM). The C-terminus is subsequently cleaved off and macrocyclized by a prolyloligopeptidase to give the final product. The sequence is that of Methyltransferase/ribosomally synthesized cyclic peptide gymnopeptides precursor gymMA1 from Gymnopus fusipes (Spindle toughshank).